Reading from the N-terminus, the 409-residue chain is MLNGRAVDTSRRPLRKIKLSLMGPAFIAAIAYIDPGNFATNIQAGATFGYTLLWVVVWANVMAMLVQLLSAKLGIATGKNLAEHIRDRFPRPVVWAYWVQAEIIVMATDLAEFIGAAIGFKLLFGVTLLQGAVLTGIATFLILMLQNRGQKPLELVIGGLLLFVAAAYIVELIFSQPDIAALGRGMLIPNLPDGNAVFLAAGVLGATIMPHVIYLHSALTQTGGEESKTERYASTKFDVAIAMTIAGFVNLAMMATAAAAFHFNGYENIAEIEEAYITLQPLLGNAAATVFGLSLIAAGLSSTVVGTLAGQVVMQGFVRFYIPMWVRRIVTMLPSFIVILAGMDATQILVMSQVLLSFGIALALVPLLVFTGNKELMGELVDTKTTQILGKLVVLIVVGLNAYLLISLL.

Transmembrane regions (helical) follow at residues 19-39 (LSLMGPAFIAAIAYIDPGNFA), 46-66 (ATFGYTLLWVVVWANVMAMLV), 98-118 (WVQAEIIVMATDLAEFIGAAI), 122-142 (LLFGVTLLQGAVLTGIATFLI), 155-175 (LVIGGLLLFVAAAYIVELIFS), 196-216 (AVFLAAGVLGATIMPHVIYLH), 241-261 (IAMTIAGFVNLAMMATAAAAF), 290-310 (VFGLSLIAAGLSSTVVGTLAG), 320-340 (FYIPMWVRRIVTMLPSFIVIL), 348-368 (ILVMSQVLLSFGIALALVPLL), and 388-408 (ILGKLVVLIVVGLNAYLLISL).

The protein belongs to the NRAMP family.

It is found in the cell inner membrane. Its function is as follows. H(+)-stimulated, divalent metal cation uptake system. In Yersinia pseudotuberculosis serotype O:1b (strain IP 31758), this protein is Divalent metal cation transporter MntH.